Reading from the N-terminus, the 300-residue chain is Protoheme IX farnesyltransferase (300 aa).

9 helical membrane passes run 20–40 (ITKA…YLLG), 49–69 (WSVL…SNAY), 97–117 (VTAL…LYTI), 122–142 (AMFA…LKTV), 145–165 (LSVF…WVAA), 176–196 (LFLI…WFLY), 217–237 (ALQV…PVLG), 242–262 (LFIS…MLFY), and 278–298 (LMLV…VDKF).

Belongs to the UbiA prenyltransferase family. Protoheme IX farnesyltransferase subfamily.

It is found in the cell inner membrane. It carries out the reaction heme b + (2E,6E)-farnesyl diphosphate + H2O = Fe(II)-heme o + diphosphate. The protein operates within porphyrin-containing compound metabolism; heme O biosynthesis; heme O from protoheme: step 1/1. Functionally, converts heme B (protoheme IX) to heme O by substitution of the vinyl group on carbon 2 of heme B porphyrin ring with a hydroxyethyl farnesyl side group. The chain is Protoheme IX farnesyltransferase from Flavobacterium johnsoniae (strain ATCC 17061 / DSM 2064 / JCM 8514 / BCRC 14874 / CCUG 350202 / NBRC 14942 / NCIMB 11054 / UW101) (Cytophaga johnsonae).